The following is a 212-amino-acid chain: Probable GTP-binding protein EngB (212 aa).

The EngB-type G domain occupies S38–F210. Residues G46–S53, G73–Q77, D91–G94, T158–D161, and V189–N191 each bind GTP. S53 and T75 together coordinate Mg(2+).

It belongs to the TRAFAC class TrmE-Era-EngA-EngB-Septin-like GTPase superfamily. EngB GTPase family. Mg(2+) is required as a cofactor.

Its function is as follows. Necessary for normal cell division and for the maintenance of normal septation. In Rickettsia rickettsii (strain Sheila Smith), this protein is Probable GTP-binding protein EngB.